We begin with the raw amino-acid sequence, 304 residues long: tRNA uridine(34) hydroxylase (304 aa).

The Rhodanese domain maps to 124–219; that stretch reads QDEETLLIDT…YLETIPKEDS (96 aa). The active-site Cysteine persulfide intermediate is Cys-179.

Belongs to the TrhO family.

It carries out the reaction uridine(34) in tRNA + AH2 + O2 = 5-hydroxyuridine(34) in tRNA + A + H2O. In terms of biological role, catalyzes oxygen-dependent 5-hydroxyuridine (ho5U) modification at position 34 in tRNAs. The sequence is that of tRNA uridine(34) hydroxylase from Bartonella henselae (strain ATCC 49882 / DSM 28221 / CCUG 30454 / Houston 1) (Rochalimaea henselae).